A 62-amino-acid polypeptide reads, in one-letter code: Excisionase (62 aa).

The protein is Excisionase (xis) of Streptomyces ambofaciens.